A 90-amino-acid chain; its full sequence is Probable Fe(2+)-trafficking protein (90 aa).

It belongs to the Fe(2+)-trafficking protein family.

In terms of biological role, could be a mediator in iron transactions between iron acquisition and iron-requiring processes, such as synthesis and/or repair of Fe-S clusters in biosynthetic enzymes. The chain is Probable Fe(2+)-trafficking protein from Pseudomonas fluorescens (strain SBW25).